The sequence spans 695 residues: Parasporal crystal protein Cry18Ca (695 aa).

The protein belongs to the delta endotoxin family.

In terms of biological role, binds to the brush border membrane vesicles of scarab larvae and damages the gut wall somehow to allow the vegetative cells of P.popilliae to enter the hemolymph. In Paenibacillus popilliae (Bacillus popilliae), this protein is Parasporal crystal protein Cry18Ca (cry18Ca).